A 375-amino-acid polypeptide reads, in one-letter code: DNA replication and repair protein RecF (375 aa).

30–37 (GDNAQGKS) is an ATP binding site.

It belongs to the RecF family.

The protein localises to the cytoplasm. Its function is as follows. The RecF protein is involved in DNA metabolism; it is required for DNA replication and normal SOS inducibility. RecF binds preferentially to single-stranded, linear DNA. It also seems to bind ATP. The polypeptide is DNA replication and repair protein RecF (Gloeobacter violaceus (strain ATCC 29082 / PCC 7421)).